A 510-amino-acid polypeptide reads, in one-letter code: Serine/threonine protein phosphatase 2A 59 kDa regulatory subunit B' eta isoform (510 aa).

Residues 1-87 (MWKQILSKLP…NNNNNNNNGV (87 aa)) form a disordered region. Residues 10–19 (PNKKSSKHEH) show a composition bias toward basic residues. A compositionally biased stretch (low complexity) spans 27 to 42 (HSSSSSHTSGASTSKS).

This sequence belongs to the phosphatase 2A regulatory subunit B56 family. In terms of assembly, PP2A consists of a common heteromeric enzyme, composed of a catalytic subunit (subunits C), a constant regulatory subunit (subunit A), and a variety of regulatory subunits such as subunits B (the R2/B/PR55/B55, R3/B''/PR72/PR130/PR59 and R5/B'/B56 families). Interacts with BZR1. Interacts with BRI1.

It localises to the nucleus. It is found in the nucleolus. The protein localises to the cytoplasm. Functionally, the B regulatory subunit may modulate substrate selectivity and catalytic activity, and may also direct the localization of the catalytic enzyme to a particular subcellular compartment. The holoenzyme composed of PP2AA1, PP2A4 and B'ETA acts as negative regulator of plant innate immunity by controlling BAK1 phosphorylation state and activation in surface-localized immune receptor complexes. Required for the formation of the PP2A holoenzyme that negatively regulates brassinosteroid signaling by dephosphorylating and inactivating BRI1 in the cytoplasm. This Arabidopsis thaliana (Mouse-ear cress) protein is Serine/threonine protein phosphatase 2A 59 kDa regulatory subunit B' eta isoform (B'ETA).